Reading from the N-terminus, the 391-residue chain is Formate-dependent phosphoribosylglycinamide formyltransferase (391 aa).

Residues 18–19 and Glu78 contribute to the N(1)-(5-phospho-beta-D-ribosyl)glycinamide site; that span reads EL. Residues Arg110, Lys151, 156-161, 191-194, and Glu199 contribute to the ATP site; these read SSGKGQ and EEFI. An ATP-grasp domain is found at 115 to 305; it reads ELAHEELGIR…EFELHLRAIL (191 aa). Residues Glu264 and Glu276 each contribute to the Mg(2+) site. Residues Asp283, Lys353, and 360–361 contribute to the N(1)-(5-phospho-beta-D-ribosyl)glycinamide site; that span reads RR.

This sequence belongs to the PurK/PurT family. Homodimer.

It carries out the reaction N(1)-(5-phospho-beta-D-ribosyl)glycinamide + formate + ATP = N(2)-formyl-N(1)-(5-phospho-beta-D-ribosyl)glycinamide + ADP + phosphate + H(+). Its pathway is purine metabolism; IMP biosynthesis via de novo pathway; N(2)-formyl-N(1)-(5-phospho-D-ribosyl)glycinamide from N(1)-(5-phospho-D-ribosyl)glycinamide (formate route): step 1/1. In terms of biological role, involved in the de novo purine biosynthesis. Catalyzes the transfer of formate to 5-phospho-ribosyl-glycinamide (GAR), producing 5-phospho-ribosyl-N-formylglycinamide (FGAR). Formate is provided by PurU via hydrolysis of 10-formyl-tetrahydrofolate. The protein is Formate-dependent phosphoribosylglycinamide formyltransferase of Nostoc sp. (strain PCC 7120 / SAG 25.82 / UTEX 2576).